The primary structure comprises 411 residues: Protein Brevis radix-like 2 (411 aa).

2 disordered regions span residues 10–31 (KDGG…KSLT) and 103–149 (AAPS…DDDE). Residues 20 to 31 (ATATPNSGKSLT) are compositionally biased toward polar residues. Residues 136–149 (GEEDYDDDDDDDDE) are compositionally biased toward acidic residues. The BRX 1 domain occupies 161-217 (REWTAQVEPGVQITFVSIPGGAGNDLKRIRFSREMFNKWEAQRWWGENYDRVVELYN). Disordered stretches follow at residues 245-294 (SRVG…VAAA) and 324-346 (AGPA…ASVS). Residues 276–294 (SRTASSKAQLSSSSSVAAA) are compositionally biased toward low complexity. The BRX 2 domain occupies 356 to 411 (TEWVEQDEPGVSITIREFGDGTRELRRVRFSRERFGEERAKVWWEQNRDRIHAQYL).

Belongs to the BRX family.

It localises to the nucleus. In Oryza sativa subsp. japonica (Rice), this protein is Protein Brevis radix-like 2 (BRXL2).